A 99-amino-acid chain; its full sequence is Large ribosomal subunit protein uL23 (99 aa).

Belongs to the universal ribosomal protein uL23 family. In terms of assembly, part of the 50S ribosomal subunit. Contacts protein L29, and trigger factor when it is bound to the ribosome.

Its function is as follows. One of the early assembly proteins it binds 23S rRNA. One of the proteins that surrounds the polypeptide exit tunnel on the outside of the ribosome. Forms the main docking site for trigger factor binding to the ribosome. The polypeptide is Large ribosomal subunit protein uL23 (Hydrogenobaculum sp. (strain Y04AAS1)).